A 109-amino-acid polypeptide reads, in one-letter code: MTMARNWRDIRADAVAQGRVDLQRAAVAREEMRDAVLAHRLAEIRKALGHARQADVAALMGVSQARVSKLESGDLSHTELGTLQAYVAALGGHLRIVAEFGENTVELTA.

Residues 41–97 (LAEIRKALGHARQADVAALMGVSQARVSKLESGDLSHTELGTLQAYVAALGGHLRIV) enclose the HTH cro/C1-type domain. Positions 53–72 (QADVAALMGVSQARVSKLES) form a DNA-binding region, H-T-H motif.

In terms of biological role, putative antitoxin component of a type II toxin-antitoxin (TA) system. Its cognate toxin would be HigB3. This chain is Putative antitoxin HigA3, found in Mycobacterium tuberculosis (strain ATCC 25618 / H37Rv).